Reading from the N-terminus, the 448-residue chain is Fibulin-5 (448 aa).

The N-terminal stretch at 1 to 23 (MPGIKRILTVTILALCLPSPGNA) is a signal peptide. Residues 42-82 (DIDECRTIPEACRGDMMCVNQNGGYLCIPRTNPVYRGPYSN) form the EGF-like 1; calcium-binding domain. Disulfide bonds link Cys-46–Cys-59, Cys-53–Cys-68, Cys-131–Cys-144, Cys-138–Cys-153, Cys-155–Cys-166, Cys-172–Cys-181, Cys-177–Cys-190, Cys-192–Cys-205, Cys-211–Cys-221, Cys-217–Cys-230, Cys-232–Cys-245, Cys-251–Cys-262, Cys-258–Cys-271, Cys-273–Cys-286, Cys-292–Cys-305, Cys-299–Cys-314, and Cys-320–Cys-332. Positions 54 to 56 (RGD) match the Cell attachment site motif. The region spanning 127 to 167 (DVDECATDSHQCNPTQICINTEGGYTCSCTDGYWLLEGQCL) is the EGF-like 2; calcium-binding domain. Residues 168-206 (DIDECRYGYCQQLCANVPGSYSCTCNPGFTLNEDGRSCQ) enclose the EGF-like 3; calcium-binding domain. In terms of domain architecture, EGF-like 4; calcium-binding spans 207-246 (DVNECATENPCVQTCVNTYGSFICRCDPGYELEEDGVHCS). The interval 245–448 (CSDMDECSFS…LRIYVSQYPF (204 aa)) is interaction with LOXL1. An EGF-like 5; calcium-binding domain is found at 247-287 (DMDECSFSEFLCQHECVNQPGTYFCSCPPGYILLDDNRSCQ). Residues Asn-283 and Asn-296 are each glycosylated (N-linked (GlcNAc...) asparagine). In terms of domain architecture, EGF-like 6; calcium-binding spans 288 to 333 (DINECEHRNHTCNLQQTCYNLQGGFKCIDPIRCEEPYLRISDNRCM).

This sequence belongs to the fibulin family. In terms of assembly, homodimer. Monomer, homodimerizes in presence of Ca(2+). Interacts with ELN. Interacts (via N-terminus) with the integrins ITGAV/ITGB3, ITGAV/ITGB5 and ITGA9/ITGB1. Interacts with FBN1 (via N-terminal domain). Forms a ternary complex with ELN and FBN1. Interacts with EFEMP2 with moderate affinity. Interacts with LOXL1. In terms of processing, N-glycosylated. Expressed in skin fibroblasts (at protein level). Expressed predominantly in heart, ovary, and colon but also in kidney, pancreas, testis, lung and placenta. Not detectable in brain, liver, thymus, prostate, or peripheral blood leukocytes.

It is found in the secreted. Its subcellular location is the extracellular space. The protein localises to the extracellular matrix. Essential for elastic fiber formation, is involved in the assembly of continuous elastin (ELN) polymer and promotes the interaction of microfibrils and ELN. Stabilizes and organizes elastic fibers in the skin, lung and vasculature. Promotes adhesion of endothelial cells through interaction of integrins and the RGD motif. Vascular ligand for integrin receptors which may play a role in vascular development and remodeling. May act as an adapter that mediates the interaction between FBN1 and ELN. The chain is Fibulin-5 (FBLN5) from Homo sapiens (Human).